A 511-amino-acid polypeptide reads, in one-letter code: ATP synthase subunit alpha, mitochondrial (511 aa).

171 to 178 is an ATP binding site; it reads GDRQTGKT.

Belongs to the ATPase alpha/beta chains family. As to quaternary structure, F-type ATPases have 2 components, CF(1) - the catalytic core - and CF(0) - the membrane proton channel. CF(1) has five subunits: alpha(3), beta(3), gamma(1), delta(1), epsilon(1). CF(0) has three main subunits: a, b and c.

Its subcellular location is the mitochondrion. The protein resides in the mitochondrion inner membrane. Its function is as follows. Mitochondrial membrane ATP synthase (F(1)F(0) ATP synthase or Complex V) produces ATP from ADP in the presence of a proton gradient across the membrane which is generated by electron transport complexes of the respiratory chain. F-type ATPases consist of two structural domains, F(1) - containing the extramembraneous catalytic core, and F(0) - containing the membrane proton channel, linked together by a central stalk and a peripheral stalk. During catalysis, ATP synthesis in the catalytic domain of F(1) is coupled via a rotary mechanism of the central stalk subunits to proton translocation. Subunits alpha and beta form the catalytic core in F(1). Rotation of the central stalk against the surrounding alpha(3)beta(3) subunits leads to hydrolysis of ATP in three separate catalytic sites on the beta subunits. Subunit alpha does not bear the catalytic high-affinity ATP-binding sites. The chain is ATP synthase subunit alpha, mitochondrial (ATPA) from Oenothera biennis (German evening primrose).